The primary structure comprises 328 residues: Malate dehydrogenase (328 aa).

16 to 22 (GAAGQIS) serves as a coordination point for NAD(+). Residues arginine 97 and arginine 103 each contribute to the substrate site. NAD(+)-binding positions include asparagine 110, glutamine 117, and 134–136 (VGN). Residues asparagine 136 and arginine 167 each coordinate substrate. Histidine 192 acts as the Proton acceptor in catalysis.

The protein belongs to the LDH/MDH superfamily. MDH type 2 family. Homotetramer.

It carries out the reaction (S)-malate + NAD(+) = oxaloacetate + NADH + H(+). With respect to regulation, citrate activates the enzyme in the oxidation of malate to oxaloacetate and inhibits it in the reverse reaction. Functionally, catalyzes the reversible oxidation of malate to oxaloacetate. Exhibits higher catalytic efficiency for oxaloacetate reduction than for malate oxidation in vitro. Almost equally active both for NADH and NADPH on the bases of the kcat values at pH 6.5, but catalytic efficiency for oxaloacetate reduction is 50-fold higher with NADH. The protein is Malate dehydrogenase of Corynebacterium glutamicum (strain ATCC 13032 / DSM 20300 / JCM 1318 / BCRC 11384 / CCUG 27702 / LMG 3730 / NBRC 12168 / NCIMB 10025 / NRRL B-2784 / 534).